Reading from the N-terminus, the 197-residue chain is Holliday junction branch migration complex subunit RuvA (197 aa).

The interval methionine 1 to valine 63 is domain I. Residues aspartate 64–threonine 139 form a domain II region. The segment at threonine 139 to valine 143 is flexible linker. The segment at asparagine 144–arginine 197 is domain III.

Belongs to the RuvA family. In terms of assembly, homotetramer. Forms an RuvA(8)-RuvB(12)-Holliday junction (HJ) complex. HJ DNA is sandwiched between 2 RuvA tetramers; dsDNA enters through RuvA and exits via RuvB. An RuvB hexamer assembles on each DNA strand where it exits the tetramer. Each RuvB hexamer is contacted by two RuvA subunits (via domain III) on 2 adjacent RuvB subunits; this complex drives branch migration. In the full resolvosome a probable DNA-RuvA(4)-RuvB(12)-RuvC(2) complex forms which resolves the HJ.

The protein localises to the cytoplasm. Functionally, the RuvA-RuvB-RuvC complex processes Holliday junction (HJ) DNA during genetic recombination and DNA repair, while the RuvA-RuvB complex plays an important role in the rescue of blocked DNA replication forks via replication fork reversal (RFR). RuvA specifically binds to HJ cruciform DNA, conferring on it an open structure. The RuvB hexamer acts as an ATP-dependent pump, pulling dsDNA into and through the RuvAB complex. HJ branch migration allows RuvC to scan DNA until it finds its consensus sequence, where it cleaves and resolves the cruciform DNA. This chain is Holliday junction branch migration complex subunit RuvA, found in Mycobacterium marinum (strain ATCC BAA-535 / M).